The sequence spans 62 residues: Large ribosomal subunit protein bL32 (62 aa).

Positions 1-16 (MAVPKRKTSPSRRGMR) are enriched in basic residues. Residues 1–44 (MAVPKRKTSPSRRGMRRSADALKAPTYVEDKDSGELRRPHHIDL) are disordered. The span at 28-44 (VEDKDSGELRRPHHIDL) shows a compositional bias: basic and acidic residues.

Belongs to the bacterial ribosomal protein bL32 family.

This chain is Large ribosomal subunit protein bL32, found in Methylorubrum extorquens (strain CM4 / NCIMB 13688) (Methylobacterium extorquens).